The primary structure comprises 210 residues: Pyridoxine/pyridoxamine 5'-phosphate oxidase (210 aa).

Substrate-binding positions include 7–10 (REDY) and Lys-65. FMN is bound by residues 60 to 65 (RVVLLK), 75 to 76 (FT), Arg-81, Lys-82, and Gln-104. The substrate site is built by Tyr-122, Arg-126, and Ser-130. Residues 139–140 (QS) and Trp-183 contribute to the FMN site. 189–191 (RLH) is a substrate binding site. FMN is bound at residue Arg-193.

The protein belongs to the pyridoxamine 5'-phosphate oxidase family. In terms of assembly, homodimer. It depends on FMN as a cofactor.

The catalysed reaction is pyridoxamine 5'-phosphate + O2 + H2O = pyridoxal 5'-phosphate + H2O2 + NH4(+). It catalyses the reaction pyridoxine 5'-phosphate + O2 = pyridoxal 5'-phosphate + H2O2. The protein operates within cofactor metabolism; pyridoxal 5'-phosphate salvage; pyridoxal 5'-phosphate from pyridoxamine 5'-phosphate: step 1/1. It participates in cofactor metabolism; pyridoxal 5'-phosphate salvage; pyridoxal 5'-phosphate from pyridoxine 5'-phosphate: step 1/1. Functionally, catalyzes the oxidation of either pyridoxine 5'-phosphate (PNP) or pyridoxamine 5'-phosphate (PMP) into pyridoxal 5'-phosphate (PLP). The chain is Pyridoxine/pyridoxamine 5'-phosphate oxidase from Actinobacillus succinogenes (strain ATCC 55618 / DSM 22257 / CCUG 43843 / 130Z).